The sequence spans 604 residues: Glutamine--fructose-6-phosphate aminotransferase [isomerizing] (604 aa).

Residue cysteine 2 is the Nucleophile; for GATase activity of the active site. A Glutamine amidotransferase type-2 domain is found at 2–218; it reads CGIVGVVGNR…DKELVILTKD (217 aa). SIS domains are found at residues 284–423 and 452–594; these read IITS…ANGK and VAEK…VDKP. Residue lysine 599 is the For Fru-6P isomerization activity of the active site.

Homodimer.

It localises to the cytoplasm. The catalysed reaction is D-fructose 6-phosphate + L-glutamine = D-glucosamine 6-phosphate + L-glutamate. Functionally, catalyzes the first step in hexosamine metabolism, converting fructose-6P into glucosamine-6P using glutamine as a nitrogen source. This Streptococcus pyogenes serotype M3 (strain ATCC BAA-595 / MGAS315) protein is Glutamine--fructose-6-phosphate aminotransferase [isomerizing].